The primary structure comprises 207 residues: MDTFIREFDMALRAIAGATRSGRANPADRLAPDDGQLEQAERRHVAGLMRVNHVGEVCAQALYQAQKLTARNDDVRTQMDTAAREEEDHLAWCAERLRELDSRPSLLNPLWYAGAFAIGFLAGRAGDKVSLGFVAETEHQVEQHLSGHLDQLPAADGRSRAILEQMRDDEIRHGDAARAAGGVPLPAPVRALMRGASRVMTTAAYRI.

Positions 56, 86, 89, 138, 170, and 173 each coordinate Fe cation.

Belongs to the COQ7 family. Fe cation serves as cofactor.

The protein resides in the cell membrane. It catalyses the reaction a 5-methoxy-2-methyl-3-(all-trans-polyprenyl)benzene-1,4-diol + AH2 + O2 = a 3-demethylubiquinol + A + H2O. Its pathway is cofactor biosynthesis; ubiquinone biosynthesis. In terms of biological role, catalyzes the hydroxylation of 2-nonaprenyl-3-methyl-6-methoxy-1,4-benzoquinol during ubiquinone biosynthesis. The protein is 3-demethoxyubiquinol 3-hydroxylase of Cupriavidus pinatubonensis (strain JMP 134 / LMG 1197) (Cupriavidus necator (strain JMP 134)).